We begin with the raw amino-acid sequence, 980 residues long: Protein translocase subunit SecA (980 aa).

ATP-binding positions include Gln109, 127–131 (GEGKT), and Asp529. Residues 954-980 (QKIGRNDPCPCGSGKKYKHCHGKDNPQ) are disordered. Zn(2+)-binding residues include Cys962, Cys964, Cys973, and His974.

Belongs to the SecA family. In terms of assembly, monomer and homodimer. Part of the essential Sec protein translocation apparatus which comprises SecA, SecYEG and auxiliary proteins SecDF. Other proteins may also be involved. Zn(2+) serves as cofactor.

The protein resides in the cell inner membrane. Its subcellular location is the cytoplasm. The enzyme catalyses ATP + H2O + cellular proteinSide 1 = ADP + phosphate + cellular proteinSide 2.. Functionally, part of the Sec protein translocase complex. Interacts with the SecYEG preprotein conducting channel. Has a central role in coupling the hydrolysis of ATP to the transfer of proteins into and across the cell membrane, serving as an ATP-driven molecular motor driving the stepwise translocation of polypeptide chains across the membrane. The polypeptide is Protein translocase subunit SecA (Brachyspira hyodysenteriae (strain ATCC 49526 / WA1)).